A 261-amino-acid polypeptide reads, in one-letter code: tRNA pseudouridine synthase A (261 aa).

Asp-51 functions as the Nucleophile in the catalytic mechanism. Tyr-109 lines the substrate pocket.

Belongs to the tRNA pseudouridine synthase TruA family. As to quaternary structure, homodimer.

It catalyses the reaction uridine(38/39/40) in tRNA = pseudouridine(38/39/40) in tRNA. Formation of pseudouridine at positions 38, 39 and 40 in the anticodon stem and loop of transfer RNAs. The chain is tRNA pseudouridine synthase A from Shewanella piezotolerans (strain WP3 / JCM 13877).